The sequence spans 78 residues: Cytochrome c-551 (78 aa).

The heme c site is built by Cys14, Cys17, His18, and Met55.

Binds 1 heme c group covalently per subunit.

This Halorhodospira halophila (Ectothiorhodospira halophila) protein is Cytochrome c-551.